The following is a 392-amino-acid chain: Bifunctional enzyme Fae/Hps (392 aa).

The interval 1–161 (MFQIGEALMG…EESNKSTHAI (161 aa)) is formaldehyde-activating enzyme. H17 (proton donor) is an active-site residue. The substrate site is built by D19, L48, K66, T68, and Q83. Positions 162 to 392 (MGFKVTRLWD…IDQFRVMTDF (231 aa)) are 3-hexulose-6-phosphate synthase.

In the N-terminal section; belongs to the formaldehyde-activating enzyme family. It in the C-terminal section; belongs to the HPS/KGPDC family. HPS subfamily.

It carries out the reaction 5,6,7,8-tetrahydromethanopterin + formaldehyde = 5,10-methylenetetrahydromethanopterin + H2O. It catalyses the reaction D-ribulose 5-phosphate + formaldehyde = D-arabino-hex-3-ulose 6-phosphate. Its pathway is carbohydrate biosynthesis; D-ribose 5-phosphate biosynthesis. Its function is as follows. Catalyzes the condensation of formaldehyde with tetrahydromethanopterin (H(4)MPT) to 5,10-methylenetetrahydromethanopterin. In terms of biological role, catalyzes the reversible formation of ribulose-5-phosphate and formaldehyde from 3-hexulose-6-phosphate. This is Bifunctional enzyme Fae/Hps from Methanosarcina mazei (strain ATCC BAA-159 / DSM 3647 / Goe1 / Go1 / JCM 11833 / OCM 88) (Methanosarcina frisia).